A 545-amino-acid chain; its full sequence is Glucose-6-phosphate isomerase (545 aa).

Glutamate 351 functions as the Proton donor in the catalytic mechanism. Residues histidine 382 and lysine 510 contribute to the active site.

The protein belongs to the GPI family.

It localises to the cytoplasm. It catalyses the reaction alpha-D-glucose 6-phosphate = beta-D-fructose 6-phosphate. It functions in the pathway carbohydrate biosynthesis; gluconeogenesis. Its pathway is carbohydrate degradation; glycolysis; D-glyceraldehyde 3-phosphate and glycerone phosphate from D-glucose: step 2/4. Catalyzes the reversible isomerization of glucose-6-phosphate to fructose-6-phosphate. The sequence is that of Glucose-6-phosphate isomerase from Helicobacter pylori (strain ATCC 700392 / 26695) (Campylobacter pylori).